Consider the following 63-residue polypeptide: DNA gyrase inhibitor YacG (63 aa).

4 residues coordinate Zn(2+): C9, C12, C28, and C32.

It belongs to the DNA gyrase inhibitor YacG family. As to quaternary structure, interacts with GyrB. The cofactor is Zn(2+).

In terms of biological role, inhibits all the catalytic activities of DNA gyrase by preventing its interaction with DNA. Acts by binding directly to the C-terminal domain of GyrB, which probably disrupts DNA binding by the gyrase. The sequence is that of DNA gyrase inhibitor YacG from Salmonella paratyphi A (strain AKU_12601).